The primary structure comprises 94 residues: Lipoate-protein ligase A subunit 2 (94 aa).

As to quaternary structure, heterodimer composed of LplA and LplB.

The enzyme catalyses L-lysyl-[lipoyl-carrier protein] + (R)-lipoate + ATP = N(6)-[(R)-lipoyl]-L-lysyl-[lipoyl-carrier protein] + AMP + diphosphate + H(+). Its pathway is protein modification; protein lipoylation via exogenous pathway; protein N(6)-(lipoyl)lysine from lipoate: step 1/2. The protein operates within protein modification; protein lipoylation via exogenous pathway; protein N(6)-(lipoyl)lysine from lipoate: step 2/2. Its function is as follows. Part of a lipoate-protein ligase complex that catalyzes both the ATP-dependent activation of exogenously supplied lipoate to lipoyl-AMP and the transfer of the activated lipoyl onto the lipoyl domains of lipoate-dependent enzymes. Can also use octanoate as substrate. In Thermoplasma acidophilum (strain ATCC 25905 / DSM 1728 / JCM 9062 / NBRC 15155 / AMRC-C165), this protein is Lipoate-protein ligase A subunit 2 (lplB).